Consider the following 1401-residue polypeptide: DNA-directed RNA polymerase subunit beta (1401 aa).

This sequence belongs to the RNA polymerase beta chain family. As to quaternary structure, the RNAP catalytic core consists of 2 alpha, 1 beta, 1 beta' and 1 omega subunit. When a sigma factor is associated with the core the holoenzyme is formed, which can initiate transcription.

The catalysed reaction is RNA(n) + a ribonucleoside 5'-triphosphate = RNA(n+1) + diphosphate. Functionally, DNA-dependent RNA polymerase catalyzes the transcription of DNA into RNA using the four ribonucleoside triphosphates as substrates. This is DNA-directed RNA polymerase subunit beta from Desulforapulum autotrophicum (strain ATCC 43914 / DSM 3382 / VKM B-1955 / HRM2) (Desulfobacterium autotrophicum).